The following is a 371-amino-acid chain: 3-dehydroquinate synthase (371 aa).

Residues 72–77, 106–110, 130–131, lysine 143, lysine 152, and 170–173 contribute to the NAD(+) site; these read DGEEHK, GVVGD, TT, and TLKT. Positions 185, 248, and 265 each coordinate Zn(2+).

Belongs to the sugar phosphate cyclases superfamily. Dehydroquinate synthase family. Co(2+) is required as a cofactor. The cofactor is Zn(2+). Requires NAD(+) as cofactor.

It is found in the cytoplasm. It carries out the reaction 7-phospho-2-dehydro-3-deoxy-D-arabino-heptonate = 3-dehydroquinate + phosphate. It functions in the pathway metabolic intermediate biosynthesis; chorismate biosynthesis; chorismate from D-erythrose 4-phosphate and phosphoenolpyruvate: step 2/7. Its function is as follows. Catalyzes the conversion of 3-deoxy-D-arabino-heptulosonate 7-phosphate (DAHP) to dehydroquinate (DHQ). This Pelotomaculum thermopropionicum (strain DSM 13744 / JCM 10971 / SI) protein is 3-dehydroquinate synthase.